We begin with the raw amino-acid sequence, 158 residues long: uncharacterized protein (158 aa).

Residues 109 to 143 form an FPG-type zinc finger; that stretch reads RVHARTGLPCPVCGDTVREVSFADKSFQYCPTCQT.

This is an uncharacterized protein from Mycobacterium tuberculosis (strain ATCC 25618 / H37Rv).